Here is a 621-residue protein sequence, read N- to C-terminus: Chaperone protein HtpG (621 aa).

The a; substrate-binding stretch occupies residues 1–325 (MTDASVKETF…SQDLSLNVSR (325 aa)). Residues 326 to 541 (EMLQSDPKLA…EGDIDVNLER (216 aa)) are b. The tract at residues 542–621 (MLKRHGQLQD…RLGSVMDSAL (80 aa)) is c.

The protein belongs to the heat shock protein 90 family. As to quaternary structure, homodimer.

It localises to the cytoplasm. Its function is as follows. Molecular chaperone. Has ATPase activity. The chain is Chaperone protein HtpG from Roseobacter denitrificans (strain ATCC 33942 / OCh 114) (Erythrobacter sp. (strain OCh 114)).